Here is a 1032-residue protein sequence, read N- to C-terminus: Vacuolar membrane protease (1032 aa).

The Cytoplasmic segment spans residues 1–11; it reads MKLGNPFVFRP. Residues 12-32 traverse the membrane as a helical segment; the sequence is GPVSFWTTIVYLAIIIPLIYV. Topologically, residues 33-415 are vacuolar; sequence QETVPPAPSE…SAFALRGLFA (383 aa). N50, N138, and N147 each carry an N-linked (GlcNAc...) asparagine glycan. Zn(2+)-binding residues include H194 and D206. E240 functions as the Proton acceptor in the catalytic mechanism. Zn(2+) is bound by residues E241, E266, and H339. A helical membrane pass occupies residues 416–436; the sequence is WTLTLLITTPLVLFVVTYLLV. Topologically, residues 437 to 469 are cytoplasmic; it reads RDDKWYFFATKVDSTVGDGEETVSFGGWKGFVR. The chain crosses the membrane as a helical span at residues 470 to 490; the sequence is FPFALVVATALTIGSVFLLAK. The Vacuolar segment spans residues 491-493; that stretch reads VNP. A helical membrane pass occupies residues 494 to 514; it reads LIIYSSGYSVWAMMISLFYFV. Residues 515–532 are Cytoplasmic-facing; that stretch reads SWLLLRGAHFVRPSALQR. The chain crosses the membrane as a helical span at residues 533-553; that stretch reads GFTLIWLFIITWVLSVFAAVA. Residues 554–560 are Vacuolar-facing; sequence EDRMNMG. A helical transmembrane segment spans residues 561–581; the sequence is AVYPLAFLHTFAFAAVLISLL. The Cytoplasmic portion of the chain corresponds to 582-701; the sequence is EQYALPAKQD…WSGRLPTWTW (120 aa). The tract at residues 595-688 is disordered; the sequence is QVSGENEEEE…RKRSFPPYEN (94 aa). Over residues 599 to 608 the composition is skewed to acidic residues; the sequence is ENEEEEEQEQ. Residues 651-660 show a composition bias toward polar residues; that stretch reads SSEQTTTFAN. The chain crosses the membrane as a helical span at residues 702–722; the sequence is FIQLLLLVPLYVTVLGNLALV. Residues 723–738 are Vacuolar-facing; sequence QTTSIGKTGTDGSSLL. Residues 739–759 traverse the membrane as a helical segment; it reads APLMGVGILAILLLLPLTPFI. The Cytoplasmic segment spans residues 760–766; the sequence is HRVSHHV. The chain crosses the membrane as a helical span at residues 767-787; it reads PLFLFLVFIGTLIYNLTAFPF. At 788-1032 the chain is on the vacuolar side; sequence SDNNRFKFYF…VEITKKIKVA (245 aa). N-linked (GlcNAc...) asparagine glycosylation is present at N940.

The protein belongs to the peptidase M28 family. Requires Zn(2+) as cofactor.

It is found in the vacuole membrane. Its function is as follows. May be involved in vacuolar sorting and osmoregulation. This chain is Vacuolar membrane protease, found in Metarhizium robertsii (strain ARSEF 23 / ATCC MYA-3075) (Metarhizium anisopliae (strain ARSEF 23)).